Reading from the N-terminus, the 225-residue chain is U2 small nuclear ribonucleoprotein B'' (225 aa).

The region spanning 7-86 (HTIYINNMND…KPMRIQYAKT (80 aa)) is the RRM 1 domain. The disordered stretch occupies residues 100 to 144 (DKEKKKEKKKAKTMEQAAAAANKKPGQGTPNAANTQGTAAPNPQV). N6-acetyllysine; alternate is present on lysine 111. A Glycyl lysine isopeptide (Lys-Gly) (interchain with G-Cter in SUMO2); alternate cross-link involves residue lysine 111. Over residues 113 to 123 (MEQAAAAANKK) the composition is skewed to low complexity. Residues 127–140 (GTPNAANTQGTAAP) show a composition bias toward polar residues. The residue at position 151 (tyrosine 151) is a Phosphotyrosine. In terms of domain architecture, RRM 2 spans 151–225 (YILFLNNLPE…HAMKITYAKK (75 aa)).

This sequence belongs to the RRM U1 A/B'' family. Identified in the spliceosome B complex. Identified in the spliceosome C complex. Present in a spliceosome complex assembled in vitro, and composed of SNRPB2, HPRP8BP and CRNKL1. Contributes to the binding of stem loop IV of U2 snRNA with SNRPP1.

It is found in the nucleus. Functionally, involved in pre-mRNA splicing as component of the spliceosome. Associated with sn-RNP U2, where it contributes to the binding of stem loop IV of U2 snRNA. This chain is U2 small nuclear ribonucleoprotein B'' (Snrpb2), found in Mus musculus (Mouse).